We begin with the raw amino-acid sequence, 188 residues long: Sec-independent protein translocase protein TatB (188 aa).

The helical transmembrane segment at 1 to 21 (MFDIGWSELVVIGVVALVAIG) threads the bilayer. A disordered region spans residues 147–188 (LPVPAETHALATTDLAPPDLAHPAPAHPEPTNSEPAKDAKAS). The segment covering 160 to 170 (DLAPPDLAHPA) has biased composition (low complexity).

It belongs to the TatB family. In terms of assembly, the Tat system comprises two distinct complexes: a TatABC complex, containing multiple copies of TatA, TatB and TatC subunits, and a separate TatA complex, containing only TatA subunits. Substrates initially bind to the TatABC complex, which probably triggers association of the separate TatA complex to form the active translocon.

Its subcellular location is the cell inner membrane. Its function is as follows. Part of the twin-arginine translocation (Tat) system that transports large folded proteins containing a characteristic twin-arginine motif in their signal peptide across membranes. Together with TatC, TatB is part of a receptor directly interacting with Tat signal peptides. TatB may form an oligomeric binding site that transiently accommodates folded Tat precursor proteins before their translocation. In Rhodopseudomonas palustris (strain HaA2), this protein is Sec-independent protein translocase protein TatB.